The chain runs to 332 residues: Holliday junction branch migration complex subunit RuvB (332 aa).

The tract at residues 1-181 (MSRILDNEMM…FGITGHMEYY (181 aa)) is large ATPase domain (RuvB-L). Residues L20, R21, G62, K65, T66, T67, 128–130 (EDF), R171, Y181, and R218 each bind ATP. T66 is a Mg(2+) binding site. Residues 182–252 (AHADLTEIVE…ITDKALTMLD (71 aa)) form a small ATPAse domain (RuvB-S) region. The segment at 255 to 332 (HEGLDYVDQK…EHLGYEYSEK (78 aa)) is head domain (RuvB-H). Positions 291, 310, 312, and 315 each coordinate DNA.

It belongs to the RuvB family. In terms of assembly, homohexamer. Forms an RuvA(8)-RuvB(12)-Holliday junction (HJ) complex. HJ DNA is sandwiched between 2 RuvA tetramers; dsDNA enters through RuvA and exits via RuvB. An RuvB hexamer assembles on each DNA strand where it exits the tetramer. Each RuvB hexamer is contacted by two RuvA subunits (via domain III) on 2 adjacent RuvB subunits; this complex drives branch migration. In the full resolvosome a probable DNA-RuvA(4)-RuvB(12)-RuvC(2) complex forms which resolves the HJ.

The protein resides in the cytoplasm. The catalysed reaction is ATP + H2O = ADP + phosphate + H(+). In terms of biological role, the RuvA-RuvB-RuvC complex processes Holliday junction (HJ) DNA during genetic recombination and DNA repair, while the RuvA-RuvB complex plays an important role in the rescue of blocked DNA replication forks via replication fork reversal (RFR). RuvA specifically binds to HJ cruciform DNA, conferring on it an open structure. The RuvB hexamer acts as an ATP-dependent pump, pulling dsDNA into and through the RuvAB complex. RuvB forms 2 homohexamers on either side of HJ DNA bound by 1 or 2 RuvA tetramers; 4 subunits per hexamer contact DNA at a time. Coordinated motions by a converter formed by DNA-disengaged RuvB subunits stimulates ATP hydrolysis and nucleotide exchange. Immobilization of the converter enables RuvB to convert the ATP-contained energy into a lever motion, pulling 2 nucleotides of DNA out of the RuvA tetramer per ATP hydrolyzed, thus driving DNA branch migration. The RuvB motors rotate together with the DNA substrate, which together with the progressing nucleotide cycle form the mechanistic basis for DNA recombination by continuous HJ branch migration. Branch migration allows RuvC to scan DNA until it finds its consensus sequence, where it cleaves and resolves cruciform DNA. The chain is Holliday junction branch migration complex subunit RuvB from Streptococcus pneumoniae serotype 19F (strain G54).